A 397-amino-acid chain; its full sequence is Xylose isomerase (397 aa).

Active-site residues include His54 and Asp57. Mg(2+)-binding residues include Glu181, Glu217, His220, Asp245, Asp255, Asp257, and Asp293.

Belongs to the xylose isomerase family. In terms of assembly, homotetramer. Mg(2+) is required as a cofactor.

It localises to the cytoplasm. It catalyses the reaction alpha-D-xylose = alpha-D-xylulofuranose. This chain is Xylose isomerase, found in Clavibacter sepedonicus (Clavibacter michiganensis subsp. sepedonicus).